We begin with the raw amino-acid sequence, 496 residues long: Glycerol kinase (496 aa).

An ADP-binding site is contributed by Thr12. 3 residues coordinate ATP: Thr12, Thr13, and Ser14. Thr12 is a binding site for sn-glycerol 3-phosphate. Arg16 serves as a coordination point for ADP. The sn-glycerol 3-phosphate site is built by Arg82, Glu83, Tyr134, and Asp244. Residues Arg82, Glu83, Tyr134, Asp244, and Gln245 each contribute to the glycerol site. ADP contacts are provided by Thr266 and Gly309. Residues Thr266, Gly309, Gln313, and Gly410 each contribute to the ATP site. Residues Gly410 and Asn414 each coordinate ADP.

This sequence belongs to the FGGY kinase family.

It carries out the reaction glycerol + ATP = sn-glycerol 3-phosphate + ADP + H(+). It participates in polyol metabolism; glycerol degradation via glycerol kinase pathway; sn-glycerol 3-phosphate from glycerol: step 1/1. Inhibited by fructose 1,6-bisphosphate (FBP). In terms of biological role, key enzyme in the regulation of glycerol uptake and metabolism. Catalyzes the phosphorylation of glycerol to yield sn-glycerol 3-phosphate. This chain is Glycerol kinase, found in Treponema denticola (strain ATCC 35405 / DSM 14222 / CIP 103919 / JCM 8153 / KCTC 15104).